Reading from the N-terminus, the 268-residue chain is Putative ABC transporter ATP-binding protein MK0182 (268 aa).

The region spanning 1–229 is the ABC transporter domain; that stretch reads MTHEYPDGTC…VDLIRESGLK (229 aa). 29–36 is an ATP binding site; that stretch reads GPNGSGKT.

Belongs to the ABC transporter superfamily.

The protein localises to the cell membrane. Functionally, probably part of an ABC transporter complex. Responsible for energy coupling to the transport system. This Methanopyrus kandleri (strain AV19 / DSM 6324 / JCM 9639 / NBRC 100938) protein is Putative ABC transporter ATP-binding protein MK0182.